Reading from the N-terminus, the 82-residue chain is Savignygrin (+) (82 aa).

Positions 1–21 (MQANIFVFAFLLLSVAVAAYG) are cleaved as a signal peptide. 3 cysteine pairs are disulfide-bonded: C26-C79, C34-C59, and C53-C75. The short motif at 35-37 (RGD) is the Cell attachment site element.

In terms of tissue distribution, expressed in salivary glands.

Its subcellular location is the cytoplasmic vesicle. It is found in the secretory vesicle. It localises to the secreted. Tick salivary platelet aggregation inhibitor that plays an important part in the anti-hemostatic strategy of ticks. Inhibits platelet aggregation induced by ADP (IC(50)=130 nM), collagen, the thrombin receptor-activating peptide, and epinephrine, although platelets are activated and their shape changed. Binding to platelets is similar for resting and activated platelets (Kd=50-70 nM). Acts by specifically binding to platelet membrane glycoprotein IIb-IIIa (ITGA2B/ITGB3) in a divalent metal ion dependent manner. In contrast to many disintegrins which only interacts with the beta-3 subunit, this protein interacts with the two subunits (alpha-IIb and beta-3). Also causes disaggregation of aggregated platelets without influencing the activated spherical shape associated with aggregated platelets and causes a decrease in the number of pseudopodia on the activated platelet surface. Does not show any inhibitory activity for the different serine proteases tested. The polypeptide is Savignygrin (+) (Ornithodoros kalahariensis (Tick)).